The sequence spans 240 residues: MKTNKLINKSFRFKQFSIEEGTCGMPISTDGVLLGSWAFSLSPTTILDIGCGTGLLSLMCAQRFPHAHITALDIEQTAYLAAEHNRQQSPWAERIECQHADILHWQPSKRFAAIICNPPYFNSGETAQHQVRATARHTISLQHQALIERLPQLLEPDGVASFILPKAEGEDFIALARQAGLFVGRYCQVQPTTDKPVHRLLFELHLSPCLPVETRLVIREQQGYSEAFCQLTRDFYLKMS.

This sequence belongs to the methyltransferase superfamily. tRNA (adenine-N(6)-)-methyltransferase family.

It is found in the cytoplasm. It carries out the reaction adenosine(37) in tRNA1(Val) + S-adenosyl-L-methionine = N(6)-methyladenosine(37) in tRNA1(Val) + S-adenosyl-L-homocysteine + H(+). Functionally, specifically methylates the adenine in position 37 of tRNA(1)(Val) (anticodon cmo5UAC). This chain is tRNA1(Val) (adenine(37)-N6)-methyltransferase, found in Vibrio cholerae serotype O1 (strain ATCC 39315 / El Tor Inaba N16961).